Consider the following 445-residue polypeptide: 3-phosphoshikimate 1-carboxyvinyltransferase (445 aa).

Residues K21, S22, and R26 each contribute to the 3-phosphoshikimate site. Phosphoenolpyruvate is bound at residue K21. Residues G92 and R120 each contribute to the phosphoenolpyruvate site. Residues S165, Q166, D307, and K334 each contribute to the 3-phosphoshikimate site. Position 166 (Q166) interacts with phosphoenolpyruvate. D307 (proton acceptor) is an active-site residue. 3 residues coordinate phosphoenolpyruvate: R338, R379, and K405.

It belongs to the EPSP synthase family. In terms of assembly, monomer.

It localises to the cytoplasm. The catalysed reaction is 3-phosphoshikimate + phosphoenolpyruvate = 5-O-(1-carboxyvinyl)-3-phosphoshikimate + phosphate. The protein operates within metabolic intermediate biosynthesis; chorismate biosynthesis; chorismate from D-erythrose 4-phosphate and phosphoenolpyruvate: step 6/7. Catalyzes the transfer of the enolpyruvyl moiety of phosphoenolpyruvate (PEP) to the 5-hydroxyl of shikimate-3-phosphate (S3P) to produce enolpyruvyl shikimate-3-phosphate and inorganic phosphate. The sequence is that of 3-phosphoshikimate 1-carboxyvinyltransferase from Chlamydia felis (strain Fe/C-56) (Chlamydophila felis).